A 73-amino-acid polypeptide reads, in one-letter code: U3-agatoxin-Ao1i (73 aa).

Positions 1 to 20 (MRTIISLLLLSAMVFAEIEA) are cleaved as a signal peptide. Residues 21–34 (ISLEEGLQLFEGER) constitute a propeptide that is removed on maturation. Intrachain disulfides connect Cys-36/Cys-52, Cys-43/Cys-57, Cys-51/Cys-67, and Cys-59/Cys-65. Residue Ser-71 is modified to Serine amide.

The protein belongs to the neurotoxin 07 (Beta/delta-agtx) family. 03 (aga-4) subfamily. Aga sub-subfamily. As to expression, expressed by the venom gland.

It localises to the secreted. Its function is as follows. Insecticidal neurotoxin that induces an irreversible spastic paralysis when injected into insects. Modifies presynaptic voltage-gated sodium channels (Nav), causing them to open at the normal resting potential of the nerve. This leads to spontaneous release of neurotransmitter and repetitive action potentials in motor neurons. The sequence is that of U3-agatoxin-Ao1i from Agelena orientalis (Funnel-web spider).